We begin with the raw amino-acid sequence, 196 residues long: Corticoliberin (196 aa).

The N-terminal stretch at 1-24 is a signal peptide; it reads MRLPLLVSAGVLLVALLPCPPCRA. Residues 25 to 153 constitute a propeptide that is removed on maturation; it reads LLSRGPVPGA…HQEAPERERR (129 aa). Disordered regions lie at residues 32–61, 85–105, and 136–158; these read PGAR…QPQA, APLS…PSPE, and GARN…EEPP. Low complexity-rich tracts occupy residues 38–47 and 85–104; these read PQHPQPLDFF and APLS…RPSP. Basic and acidic residues predominate over residues 146 to 156; it reads EAPERERRSEE. Residue isoleucine 194 is modified to Isoleucine amide.

The protein belongs to the sauvagine/corticotropin-releasing factor/urotensin I family. As to quaternary structure, interacts (via C-terminus) with CRFR1 (via N-terminal extracellular domain). Produced by the hypothalamus and placenta.

It localises to the secreted. Its function is as follows. Hormone regulating the release of corticotropin from pituitary gland. Induces NLRP6 in intestinal epithelial cells, hence may influence gut microbiota profile. The protein is Corticoliberin (CRH) of Homo sapiens (Human).